The following is a 65-amino-acid chain: MPKIKTLKSAAKRFKITASGKFKRKQANLRHILTKKTTTKKRHLRPKILVSTGDMDRVKSFLPYA.

Belongs to the bacterial ribosomal protein bL35 family.

The protein is Large ribosomal subunit protein bL35 of Buchnera aphidicola subsp. Acyrthosiphon pisum (strain 5A).